Consider the following 344-residue polypeptide: Trace amine-associated receptor 8c (344 aa).

Residues Met1 to Arg31 lie on the Extracellular side of the membrane. N-linked (GlcNAc...) asparagine glycosylation is found at Asn4 and Asn18. Disulfide bonds link Cys21/Cys185 and Cys104/Cys189. A helical transmembrane segment spans residues Val32–Val52. Residues Val53–Asn67 lie on the Cytoplasmic side of the membrane. A helical membrane pass occupies residues Phe68–Ser88. At Met89–Asp111 the chain is on the extracellular side. Residues Val112–Ala132 form a helical membrane-spanning segment. Over Val133 to Ser146 the chain is Cytoplasmic. The chain crosses the membrane as a helical span at residues Val147 to Phe167. Residues Tyr168–Gln195 are Extracellular-facing. A helical membrane pass occupies residues Asp196–Tyr216. At Ser217 to Thr260 the chain is on the cytoplasmic side. Residues Leu261 to Val281 form a helical membrane-spanning segment. A topological domain (extracellular) is located at residue Asp282. A helical membrane pass occupies residues Ala283–Tyr303. Residues Asn304–Glu344 are Cytoplasmic-facing.

It belongs to the G-protein coupled receptor 1 family. In terms of tissue distribution, specifically expressed in neurons of the olfactory epithelium.

The protein resides in the cell membrane. Its function is as follows. Olfactory receptor specific for trace amines, such ascyclohexylamine (1-MPD). Trace amine compounds are enriched in animal body fluids and act on trace amine-associated receptors (TAARs) to elicit both intraspecific and interspecific innate behaviors. Ligand-binding causes a conformation change that triggers signaling via G(s)-class of G alpha proteins (GNAL or GNAS). This is Trace amine-associated receptor 8c from Mus musculus (Mouse).